The primary structure comprises 384 residues: G protein-coupled receptor 88 (384 aa).

Topologically, residues 1–35 (MTNSSSTSTSTTTGGSLLLLCEEEESWAGRRIPVS) are extracellular. A glycan (N-linked (GlcNAc...) asparagine) is linked at N3. Residues 36-56 (LLYSGLAIGGTLANGMVIYLV) form a helical membrane-spanning segment. The Cytoplasmic portion of the chain corresponds to 57–73 (SSFRKLQTTSNAFIVNG). The helical transmembrane segment at 74–94 (CAADLSVCALWMPQEAVLGLL) threads the bilayer. At 95 to 116 (PSGSAEPPGDWDGGGGSYRLLR) the chain is on the extracellular side. The chain crosses the membrane as a helical span at residues 117 to 136 (GGLLGLGLTVSLLSHCLVAL). At 137–158 (NRYLLITRAPATYQVLYQRRHT) the chain is on the cytoplasmic side. A helical transmembrane segment spans residues 159 to 179 (VGMLALSWALALGLVLLLPPW). Topologically, residues 180 to 195 (APKPGAEPPQVHYPAL) are extracellular. A helical membrane pass occupies residues 196-216 (LAAGALLAQTALLLHCYLGIV). Residues 217–285 (RRVRVSVKRV…RAQRRLSGLS (69 aa)) are Cytoplasmic-facing. The helical transmembrane segment at 286 to 306 (VLLLCCVFLLATQPLVWVSLA) threads the bilayer. Topologically, residues 307–310 (SGFS) are extracellular. A helical membrane pass occupies residues 311–331 (LPVPWGVQAASWLLCCALSAL). At 332–384 (NPLLYTWRNEEFRRSVRSVLPGVGDAAAAAAAATAVPAMSQAQLGTRAAGQHW) the chain is on the cytoplasmic side.

This sequence belongs to the G-protein coupled receptor 1 family. Expressed predominantly in the striatum.

The protein resides in the cell membrane. Its subcellular location is the cell projection. It localises to the cilium membrane. The protein localises to the cytoplasm. It is found in the nucleus. Its function is as follows. Orphan G protein-coupled receptor implicated in a large repertoire of behavioral responses that engage motor activities, spatial learning, and emotional processing. May play a role in the regulation of cognitive and motor function. Couples with the heterotrimeric G protein complex of the G(i) subfamily, consisting of GNAI1, GNB1 and GNG2, thereby acting through a G(i)-mediated pathway. Plays a role in the attenuation of D1 dopamine receptor (D1R)-mediated cAMP response in ciliated cells. In on-ciliated cells, involved in the inhibition of the beta-2 adrenergic receptor (B2AR) response. The chain is G protein-coupled receptor 88 (Gpr88) from Mus musculus (Mouse).